The following is a 331-amino-acid chain: Phosphatidylinositol transfer protein 4 (331 aa).

The protein belongs to the PtdIns transfer protein family. PI transfer class IIA subfamily.

Catalyzes the transfer of PtdIns and phosphatidylcholine between membranes. The polypeptide is Phosphatidylinositol transfer protein 4 (pitD) (Dictyostelium discoideum (Social amoeba)).